The primary structure comprises 604 residues: 3-hydroxy-3-methylglutaryl-coenzyme A reductase 2 (604 aa).

2 helical membrane passes run 47-67 (LPLY…MYFL) and 91-111 (AIVS…IGFV). The tract at residues 112 to 188 (QTFVARGNND…APLVTPAASE (77 aa)) is linker. Asn120 carries an N-linked (GlcNAc...) asparagine glycan. The interval 189–604 (EDEEIIKSVV…STKDVTKASS (416 aa)) is catalytic. Glu283 serves as the catalytic Charge relay system. Asn347 is a glycosylation site (N-linked (GlcNAc...) asparagine). Lys415 acts as the Charge relay system in catalysis. N-linked (GlcNAc...) asparagine glycosylation is present at Asn460. The active-site Charge relay system is the Asp491. His589 functions as the Proton donor in the catalytic mechanism. N-linked (GlcNAc...) asparagine glycosylation occurs at Asn593.

This sequence belongs to the HMG-CoA reductase family.

It localises to the endoplasmic reticulum membrane. It carries out the reaction (R)-mevalonate + 2 NADP(+) + CoA = (3S)-3-hydroxy-3-methylglutaryl-CoA + 2 NADPH + 2 H(+). It participates in metabolic intermediate biosynthesis; (R)-mevalonate biosynthesis; (R)-mevalonate from acetyl-CoA: step 3/3. Functionally, catalyzes the synthesis of mevalonate. The specific precursor of all isoprenoid compounds present in plants. The sequence is that of 3-hydroxy-3-methylglutaryl-coenzyme A reductase 2 (HMGR2) from Capsicum annuum (Capsicum pepper).